Reading from the N-terminus, the 388-residue chain is Putative N(4)-(beta-N-acetylglucosaminyl)-L-asparaginase GL17147 (388 aa).

An N-terminal signal peptide occupies residues 1 to 20 (MYKAQYLWLFGLVLISRSAT). 2 disulfides stabilise this stretch: Cys-94–Cys-99 and Cys-193–Cys-209. Thr-240 (nucleophile) is an active-site residue. Residues 268–271 (RVGD) and 291–294 (TGDG) contribute to the substrate site. Residues Cys-351 and Cys-378 are joined by a disulfide bond.

Belongs to the Ntn-hydrolase family. In terms of assembly, heterotetramer of two alpha and two beta chains arranged as a dimer of alpha/beta heterodimers. In terms of processing, cleaved into an alpha and beta chain by autocatalysis; this activates the enzyme. The N-terminal residue of the beta subunit is responsible for the nucleophile hydrolase activity.

It carries out the reaction N(4)-(beta-N-acetyl-D-glucosaminyl)-L-asparagine + H2O = N-acetyl-beta-D-glucosaminylamine + L-aspartate + H(+). In terms of biological role, cleaves the GlcNAc-Asn bond which joins oligosaccharides to the peptide of asparagine-linked glycoproteins. This chain is Putative N(4)-(beta-N-acetylglucosaminyl)-L-asparaginase GL17147, found in Drosophila persimilis (Fruit fly).